The following is a 258-amino-acid chain: Small ribosomal subunit protein uS2 (258 aa).

The segment at 234 to 258 (ETANAEEAMQKAAAVEAAAEAAPAQ) is disordered. A compositionally biased stretch (low complexity) spans 236–258 (ANAEEAMQKAAAVEAAAEAAPAQ).

The protein belongs to the universal ribosomal protein uS2 family.

The protein is Small ribosomal subunit protein uS2 of Desulfovibrio desulfuricans (strain ATCC 27774 / DSM 6949 / MB).